Consider the following 217-residue polypeptide: Glutathione S-transferase (217 aa).

In terms of domain architecture, GST N-terminal spans 2-82 (TIKVHGNPRS…YLAYTHDHQN (81 aa)). Residues S11, 40 to 41 (HK), 53 to 54 (QV), and 66 to 67 (ES) each bind glutathione. Residues 91 to 217 (EKHEMAAQLV…EKTLALQKQA (127 aa)) enclose the GST C-terminal domain.

The protein belongs to the GST superfamily. Phi family.

The protein resides in the cytoplasm. It catalyses the reaction RX + glutathione = an S-substituted glutathione + a halide anion + H(+). Functionally, conjugation of reduced glutathione to a wide number of exogenous and endogenous hydrophobic electrophiles. This is Glutathione S-transferase (GST) from Silene vulgaris (Bladder campion).